Reading from the N-terminus, the 220-residue chain is Deoxyribose-phosphate aldolase (220 aa).

The active-site Proton donor/acceptor is Asp-89. The active-site Schiff-base intermediate with acetaldehyde is the Lys-151. The active-site Proton donor/acceptor is Lys-180.

Belongs to the DeoC/FbaB aldolase family. DeoC type 1 subfamily.

Its subcellular location is the cytoplasm. The enzyme catalyses 2-deoxy-D-ribose 5-phosphate = D-glyceraldehyde 3-phosphate + acetaldehyde. Its pathway is carbohydrate degradation; 2-deoxy-D-ribose 1-phosphate degradation; D-glyceraldehyde 3-phosphate and acetaldehyde from 2-deoxy-alpha-D-ribose 1-phosphate: step 2/2. Its function is as follows. Catalyzes a reversible aldol reaction between acetaldehyde and D-glyceraldehyde 3-phosphate to generate 2-deoxy-D-ribose 5-phosphate. This is Deoxyribose-phosphate aldolase from Macrococcus caseolyticus (strain JCSC5402) (Macrococcoides caseolyticum).